Reading from the N-terminus, the 189-residue chain is Stathmin-4 (189 aa).

Residues C20 and C22 are each lipidated (S-palmitoyl cysteine). In terms of domain architecture, SLD spans 48-189; it reads SDMEVIELNK…NKELKEEASR (142 aa). 2 positions are modified to phosphoserine: E54 and S90. The stretch at 90 to 189 forms a coiled coil; that stretch reads SLEEIQKKLE…NKELKEEASR (100 aa). Positions 168 to 189 are disordered; the sequence is QEKDKHAEEVRKNKELKEEASR.

It belongs to the stathmin family. In terms of tissue distribution, nervous tissue.

It localises to the golgi apparatus. It is found in the cell projection. The protein resides in the growth cone. Its subcellular location is the axon. In terms of biological role, exhibits microtubule-destabilizing activity. This Rattus norvegicus (Rat) protein is Stathmin-4 (Stmn4).